The following is a 445-amino-acid chain: 6-phosphogluconate dehydrogenase, decarboxylating (445 aa).

NADP(+) contacts are provided by residues 1–4 (AVMG), 22–24 (NRS), 63–65 (VKA), and Asn91. Substrate contacts are provided by residues Asn91 and 117–119 (SGG). Lys172 acts as the Proton acceptor in catalysis. 175-176 (HN) contributes to the substrate binding site. The Proton donor role is filled by Glu179. Residues Tyr180, Lys249, Arg276, Arg434, and His440 each coordinate substrate.

This sequence belongs to the 6-phosphogluconate dehydrogenase family. As to quaternary structure, homodimer.

It carries out the reaction 6-phospho-D-gluconate + NADP(+) = D-ribulose 5-phosphate + CO2 + NADPH. The protein operates within carbohydrate degradation; pentose phosphate pathway; D-ribulose 5-phosphate from D-glucose 6-phosphate (oxidative stage): step 3/3. Functionally, catalyzes the oxidative decarboxylation of 6-phosphogluconate to ribulose 5-phosphate and CO(2), with concomitant reduction of NADP to NADPH. The sequence is that of 6-phosphogluconate dehydrogenase, decarboxylating (gnd) from Citrobacter freundii.